A 259-amino-acid polypeptide reads, in one-letter code: Putative zinc metalloprotease Rip2 (259 aa).

A run of 2 helical transmembrane segments spans residues 14 to 34 and 39 to 59; these read PIFL…WIAA and PLSY…SLCL. A Zn(2+)-binding site is contributed by His60. Glu61 is a catalytic residue. Residue His64 participates in Zn(2+) binding. 4 consecutive transmembrane segments (helical) span residues 96–116, 129–149, 159–179, and 203–223; these read LGLP…GAVY, IVSL…LGLT, VFWS…VLNL, and LAPA…TPAL.

It belongs to the peptidase M50B family. Zn(2+) serves as cofactor.

It is found in the cell membrane. The polypeptide is Putative zinc metalloprotease Rip2 (rip2) (Mycolicibacterium smegmatis (strain ATCC 700084 / mc(2)155) (Mycobacterium smegmatis)).